The primary structure comprises 82 residues: Omega-conotoxin-like 9 (82 aa).

The signal sequence occupies residues 1-22 (MKLTCMMIAAVLFLTTWTFVTA). The propeptide occupies 23 to 51 (DDSRYGLKNLFPKARHEMKNPEASKLNKR). Cystine bridges form between Cys-54–Cys-69, Cys-61–Cys-73, and Cys-68–Cys-77.

It belongs to the conotoxin O1 superfamily. In terms of tissue distribution, expressed by the venom duct.

It is found in the secreted. Omega-conotoxins act at presynaptic membranes, they bind and block voltage-gated calcium channels (Cav). The chain is Omega-conotoxin-like 9 from Conus striatus (Striated cone).